A 261-amino-acid chain; its full sequence is uncharacterized protein (261 aa).

Residues 1 to 22 (MKSIKRIGLCISLLILIIFVTS) form the signal peptide. Cysteine 23 carries the N-palmitoyl cysteine lipid modification. Cysteine 23 is lipidated: S-diacylglycerol cysteine.

This sequence belongs to the staphylococcal tandem lipoprotein family.

Its subcellular location is the cell membrane. This is an uncharacterized protein from Staphylococcus aureus (strain USA300).